Consider the following 295-residue polypeptide: Mediator of RNA polymerase II transcription subunit 27 (295 aa).

Belongs to the Mediator complex subunit 27 family. Component of the Mediator complex.

The protein localises to the nucleus. Functionally, component of the Mediator complex, a coactivator involved in the regulated transcription of nearly all RNA polymerase II-dependent genes. Mediator functions as a bridge to convey information from gene-specific regulatory proteins to the basal RNA polymerase II transcription machinery. Mediator is recruited to promoters by direct interactions with regulatory proteins and serves as a scaffold for the assembly of a functional preinitiation complex with RNA polymerase II and the general transcription factors. In Anopheles gambiae (African malaria mosquito), this protein is Mediator of RNA polymerase II transcription subunit 27 (MED27).